We begin with the raw amino-acid sequence, 265 residues long: MNRLYPHPIIAREGWPIIGGGLALSLLVSMCCGWWSLPFWVFTVFALQFFRDPAREIPQNPEAVLSPVDGRIVVVERARDPYRDVDALKISIFMNVFNVHSQKSPADCTVTKVVYNKGKFVNADLDKASTENERNAVLATTASGREITFVQVAGLVARRILCYTQAGAKLSRGERYGFIRFGSRVDMYLPVDAQAQVAIGDKVNGVSTVLARLPLTAPQIESEPESEPALQTAPVETAANPSAEQRQIEAVAAKIQAAVQDVLKD.

Ser183 acts as the Schiff-base intermediate with substrate; via pyruvic acid in catalysis. Ser183 is modified (pyruvic acid (Ser); by autocatalysis). Residues Pro218 to Ser242 form a disordered region.

It belongs to the phosphatidylserine decarboxylase family. PSD-A subfamily. Heterodimer of a large membrane-associated beta subunit and a small pyruvoyl-containing alpha subunit. Pyruvate is required as a cofactor. Is synthesized initially as an inactive proenzyme. Formation of the active enzyme involves a self-maturation process in which the active site pyruvoyl group is generated from an internal serine residue via an autocatalytic post-translational modification. Two non-identical subunits are generated from the proenzyme in this reaction, and the pyruvate is formed at the N-terminus of the alpha chain, which is derived from the carboxyl end of the proenzyme. The post-translation cleavage follows an unusual pathway, termed non-hydrolytic serinolysis, in which the side chain hydroxyl group of the serine supplies its oxygen atom to form the C-terminus of the beta chain, while the remainder of the serine residue undergoes an oxidative deamination to produce ammonia and the pyruvoyl prosthetic group on the alpha chain.

It is found in the cell membrane. It carries out the reaction a 1,2-diacyl-sn-glycero-3-phospho-L-serine + H(+) = a 1,2-diacyl-sn-glycero-3-phosphoethanolamine + CO2. Its pathway is phospholipid metabolism; phosphatidylethanolamine biosynthesis; phosphatidylethanolamine from CDP-diacylglycerol: step 2/2. Its function is as follows. Catalyzes the formation of phosphatidylethanolamine (PtdEtn) from phosphatidylserine (PtdSer). The chain is Phosphatidylserine decarboxylase proenzyme from Neisseria meningitidis serogroup C (strain 053442).